Reading from the N-terminus, the 339-residue chain is Non-homologous end joining protein Ku (339 aa).

The Ku domain occupies 10–187 (ITFGLVNIPV…LPKATTGKPT (178 aa)). Disordered stretches follow at residues 230–251 (DSGK…RQGA) and 263–339 (SLGQ…KHAA). The segment covering 267-277 (RGKEDKEDATP) has biased composition (basic and acidic residues). Basic residues predominate over residues 278–289 (ARRKAPARHAAA). The span at 290–310 (RKQPAAKRAATPPAKRASTAA) shows a compositional bias: low complexity.

This sequence belongs to the prokaryotic Ku family. Homodimer. Interacts with LigD.

With LigD forms a non-homologous end joining (NHEJ) DNA repair enzyme, which repairs dsDNA breaks with reduced fidelity. Binds linear dsDNA with 5'- and 3'- overhangs but not closed circular dsDNA nor ssDNA. Recruits and stimulates the ligase activity of LigD. The sequence is that of Non-homologous end joining protein Ku from Cupriavidus necator (strain ATCC 17699 / DSM 428 / KCTC 22496 / NCIMB 10442 / H16 / Stanier 337) (Ralstonia eutropha).